A 396-amino-acid chain; its full sequence is Acetate kinase (396 aa).

A Mg(2+)-binding site is contributed by Asn7. An ATP-binding site is contributed by Lys14. Residue Arg88 coordinates substrate. The active-site Proton donor/acceptor is the Asp145. Residues 203 to 207 (HAGNG), 278 to 280 (DAR), and 326 to 330 (GIGEN) contribute to the ATP site. Glu379 is a binding site for Mg(2+).

Belongs to the acetokinase family. As to quaternary structure, homodimer. It depends on Mg(2+) as a cofactor. Mn(2+) serves as cofactor.

It is found in the cytoplasm. It catalyses the reaction acetate + ATP = acetyl phosphate + ADP. It participates in metabolic intermediate biosynthesis; acetyl-CoA biosynthesis; acetyl-CoA from acetate: step 1/2. Its function is as follows. Catalyzes the formation of acetyl phosphate from acetate and ATP. Can also catalyze the reverse reaction. In Phytoplasma australiense, this protein is Acetate kinase.